The primary structure comprises 273 residues: Pre-mRNA-splicing factor CWC23 (273 aa).

One can recognise a J domain in the interval 15–87 (DLYALLEVSI…SLRATYNRWL (73 aa)).

Belongs to the DnaJ family. As to quaternary structure, associated with the spliceosome.

The protein resides in the cytoplasm. It localises to the nucleus. Its function is as follows. Involved in pre-mRNA splicing. May be involved in endoplasmic reticulum-associated protein degradation (ERAD) and required for growth at low and high temperatures. The protein is Pre-mRNA-splicing factor CWC23 (CWC23) of Eremothecium gossypii (strain ATCC 10895 / CBS 109.51 / FGSC 9923 / NRRL Y-1056) (Yeast).